The following is a 105-amino-acid chain: Probable molt-inhibiting hormone (105 aa).

Positions Met-1–Ala-28 are cleaved as a signal peptide. Intrachain disulfides connect Cys-35–Cys-72, Cys-52–Cys-68, and Cys-55–Cys-81.

It belongs to the arthropod CHH/MIH/GIH/VIH hormone family. As to expression, expressed in the postmolt, intermolt, and premolt stages of the shrimp eyestalks and the brain.

The protein resides in the secreted. In terms of biological role, inhibits Y-organs where molting hormone (ecdysteroid) is secreted. A molting cycle is initiated when MIH secretion diminishes or stops. The protein is Probable molt-inhibiting hormone of Metapenaeus ensis (Greasyback shrimp).